A 413-amino-acid polypeptide reads, in one-letter code: Probable isoleucine--tRNA ligase, mitochondrial (413 aa).

The 'KMSKS' region motif lies at 298 to 302 (KMSKS). Residue K301 participates in ATP binding.

Belongs to the class-I aminoacyl-tRNA synthetase family.

It is found in the mitochondrion matrix. The enzyme catalyses tRNA(Ile) + L-isoleucine + ATP = L-isoleucyl-tRNA(Ile) + AMP + diphosphate. This is Probable isoleucine--tRNA ligase, mitochondrial from Ciona intestinalis (Transparent sea squirt).